The chain runs to 354 residues: Tryptophan--tRNA ligase (354 aa).

ATP is bound by residues 13–15 (QPT) and 21–22 (GN). The short motif at 14-22 (PTGNLHLGN) is the 'HIGH' region element. L-tryptophan is bound at residue aspartate 137. Residues 149–151 (GDD), valine 208, and 217–221 (KMSKS) each bind ATP. A 'KMSKS' region motif is present at residues 217–221 (KMSKS).

The protein belongs to the class-I aminoacyl-tRNA synthetase family. As to quaternary structure, homodimer.

It is found in the cytoplasm. It carries out the reaction tRNA(Trp) + L-tryptophan + ATP = L-tryptophyl-tRNA(Trp) + AMP + diphosphate + H(+). Its function is as follows. Catalyzes the attachment of tryptophan to tRNA(Trp). This chain is Tryptophan--tRNA ligase, found in Agrobacterium fabrum (strain C58 / ATCC 33970) (Agrobacterium tumefaciens (strain C58)).